Reading from the N-terminus, the 158-residue chain is Small ribosomal subunit protein uS9 (158 aa).

It belongs to the universal ribosomal protein uS9 family.

This chain is Small ribosomal subunit protein uS9, found in Rhodopseudomonas palustris (strain HaA2).